Reading from the N-terminus, the 231-residue chain is Probable glutathione S-transferase (231 aa).

Residues 4 to 96 (PNFELYGYFR…YLEEALPTNA (93 aa)) form the GST N-terminal domain. Glutathione is bound by residues S14, Q43, V57, 80 to 81 (QS), Q124, and 128 to 130 (NLK). Residues 105–227 (NPVARAHVRT…HWQKQEDTPE (123 aa)) enclose the GST C-terminal domain.

The protein belongs to the GST superfamily. Zeta family. As to quaternary structure, homodimer.

The catalysed reaction is RX + glutathione = an S-substituted glutathione + a halide anion + H(+). Functionally, probable glutathione S-transferase. The protein is Probable glutathione S-transferase of Coccidioides immitis (strain RS) (Valley fever fungus).